We begin with the raw amino-acid sequence, 249 residues long: 23S rRNA (guanosine-2'-O-)-methyltransferase RlmB (249 aa).

S-adenosyl-L-methionine-binding residues include glycine 197, isoleucine 217, and leucine 226.

This sequence belongs to the class IV-like SAM-binding methyltransferase superfamily. RNA methyltransferase TrmH family. RlmB subfamily.

It is found in the cytoplasm. The catalysed reaction is guanosine(2251) in 23S rRNA + S-adenosyl-L-methionine = 2'-O-methylguanosine(2251) in 23S rRNA + S-adenosyl-L-homocysteine + H(+). Its function is as follows. Specifically methylates the ribose of guanosine 2251 in 23S rRNA. In Ralstonia nicotianae (strain ATCC BAA-1114 / GMI1000) (Ralstonia solanacearum), this protein is 23S rRNA (guanosine-2'-O-)-methyltransferase RlmB.